The sequence spans 208 residues: Glycerol-3-phosphate acyltransferase 1 (208 aa).

A run of 5 helical transmembrane segments spans residues 52 to 72 (VVLM…YLLI), 77 to 97 (WVIL…WLDF), 112 to 132 (FLLP…LVFI), 140 to 160 (IALA…YGSH), and 161 to 181 (SEFA…KFVL).

This sequence belongs to the PlsY family. As to quaternary structure, probably interacts with PlsX.

It localises to the cell membrane. The enzyme catalyses an acyl phosphate + sn-glycerol 3-phosphate = a 1-acyl-sn-glycero-3-phosphate + phosphate. It functions in the pathway lipid metabolism; phospholipid metabolism. Its function is as follows. Catalyzes the transfer of an acyl group from acyl-phosphate (acyl-PO(4)) to glycerol-3-phosphate (G3P) to form lysophosphatidic acid (LPA). This enzyme utilizes acyl-phosphate as fatty acyl donor, but not acyl-CoA or acyl-ACP. This is Glycerol-3-phosphate acyltransferase 1 from Dehalococcoides mccartyi (strain ATCC BAA-2266 / KCTC 15142 / 195) (Dehalococcoides ethenogenes (strain 195)).